Here is a 194-residue protein sequence, read N- to C-terminus: Peptidyl-tRNA hydrolase (194 aa).

Tyrosine 16 lines the tRNA pocket. The active-site Proton acceptor is histidine 21. Residues phenylalanine 67, asparagine 69, and asparagine 115 each coordinate tRNA.

The protein belongs to the PTH family. In terms of assembly, monomer.

It localises to the cytoplasm. It carries out the reaction an N-acyl-L-alpha-aminoacyl-tRNA + H2O = an N-acyl-L-amino acid + a tRNA + H(+). Its function is as follows. Hydrolyzes ribosome-free peptidyl-tRNAs (with 1 or more amino acids incorporated), which drop off the ribosome during protein synthesis, or as a result of ribosome stalling. In terms of biological role, catalyzes the release of premature peptidyl moieties from peptidyl-tRNA molecules trapped in stalled 50S ribosomal subunits, and thus maintains levels of free tRNAs and 50S ribosomes. The polypeptide is Peptidyl-tRNA hydrolase (Salmonella paratyphi B (strain ATCC BAA-1250 / SPB7)).